The following is a 204-amino-acid chain: Somatotropin (204 aa).

An N-terminal signal peptide occupies residues 1 to 17 (MDRVILLLSVVSLGVSS). A Pyrrolidone carboxylic acid modification is found at glutamine 18. Histidine 36 contributes to the Zn(2+) binding site. A disulfide bond links cysteine 69 and cysteine 177. Residue glutamate 186 participates in Zn(2+) binding. A disulfide bridge connects residues cysteine 194 and cysteine 202.

This sequence belongs to the somatotropin/prolactin family.

Its subcellular location is the secreted. Functionally, growth hormone plays an important role in growth control and is involved in the regulation of several anabolic processes. Implicated as an osmoregulatory substance important for seawater adaptation. The chain is Somatotropin (gh) from Sebastes schlegelii (Korean rockfish).